Consider the following 397-residue polypeptide: Cephalotocin receptor 1 (397 aa).

At 1–48 (MRYITTHPNEISTQIWNNFSSTEIWSNFSAAKNETQPIRRNQDLANAE) the chain is on the extracellular side. Asn18, Asn27, and Asn33 each carry an N-linked (GlcNAc...) asparagine glycan. A helical transmembrane segment spans residues 49 to 69 (VITLAVVIIITVIGNSIVLIT). At 70–91 (LFQRRKKLTRMHLFILHLSVTD) the chain is on the cytoplasmic side. A helical membrane pass occupies residues 92–112 (LFVAFFNNLPQMIWDITFLFL). Residues 113–120 (GTDLLCRL) lie on the Extracellular side of the membrane. The cysteines at positions 118 and 194 are disulfide-linked. A helical membrane pass occupies residues 121-141 (VTYLQSVAMYASSYVLVATAI). Over 142 to 162 (DRYFAICHPLSSHKWTTARVH) the chain is Cytoplasmic. A helical membrane pass occupies residues 163–183 (VMVFIAWMLSFLFSTPQLFIW). Topologically, residues 184–205 (SMQFSNIGLTCQATFDPEWTLK) are extracellular. Residues 206–226 (FYITWLTVAIWILPTIALTLF) form a helical membrane-spanning segment. The Cytoplasmic portion of the chain corresponds to 227–293 (YGMMCFAVWK…RGISRAKVRS (67 aa)). A helical membrane pass occupies residues 294–314 (VALTLSVVACCFICWSPFFVC). Over 315 to 331 (QMWAAWDENAPYSGAIY) the chain is Extracellular. The chain crosses the membrane as a helical span at residues 332-352 (TILLLLSSLNSCTNPWIYMIF). The Cytoplasmic segment spans residues 353–397 (SVFQHRAKTSRFVNDEETTSVTVLSSRNDIRLMSMKKKLEQTARN).

The protein belongs to the G-protein coupled receptor 1 family. Vasopressin/oxytocin receptor subfamily. As to expression, present in brain, buccal ganglion, gastric ganglion, olfactory lube, peduncle lobe, optical lobe, pancreas, the oviduct and the ovary.

The protein resides in the cell membrane. In terms of biological role, acts as a receptor for cephalotocin. The sequence is that of Cephalotocin receptor 1 from Octopus vulgaris (Common octopus).